A 344-amino-acid chain; its full sequence is Exopolyphosphatase 1 (344 aa).

The disordered stretch occupies residues 319–344 (VHTSVRAVGGQPADRNAANRSRGSKP).

It belongs to the GppA/Ppx family. In terms of assembly, homodimer.

It carries out the reaction [phosphate](n) + H2O = [phosphate](n-1) + phosphate + H(+). In terms of biological role, degradation of inorganic polyphosphates (polyP). Releases orthophosphate processively from the ends of the polyP chain. The chain is Exopolyphosphatase 1 from Mycobacterium bovis (strain ATCC BAA-935 / AF2122/97).